The chain runs to 1242 residues: ATP-dependent helicase/nuclease subunit A (1242 aa).

The UvrD-like helicase ATP-binding domain maps to 13 to 486 (SQWTDDQWKA…IDLAKNFRSR (474 aa)). Residue 34–41 (AAAGSGKT) coordinates ATP. The 301-residue stretch at 506–806 (GEIEYDADAE…RIMTIHKSKG (301 aa)) folds into the UvrD-like helicase C-terminal domain.

Belongs to the helicase family. AddA subfamily. Heterodimer of AddA and AddB/RexB. Mg(2+) serves as cofactor.

It carries out the reaction Couples ATP hydrolysis with the unwinding of duplex DNA by translocating in the 3'-5' direction.. The enzyme catalyses ATP + H2O = ADP + phosphate + H(+). Functionally, the heterodimer acts as both an ATP-dependent DNA helicase and an ATP-dependent, dual-direction single-stranded exonuclease. Recognizes the chi site generating a DNA molecule suitable for the initiation of homologous recombination. The AddA nuclease domain is required for chi fragment generation; this subunit has the helicase and 3' -&gt; 5' nuclease activities. The protein is ATP-dependent helicase/nuclease subunit A of Bacillus cytotoxicus (strain DSM 22905 / CIP 110041 / 391-98 / NVH 391-98).